The primary structure comprises 457 residues: Protein unc-93 homolog A (457 aa).

The next 5 helical transmembrane spans lie at 8 to 28 (VLVL…LQSL), 42 to 62 (ALST…PVLI), 65 to 85 (LGCK…SLGN), 86 to 106 (FYAS…GAAA), and 140 to 160 (IFFL…SLVF). N-linked (GlcNAc...) asparagine glycosylation occurs at N190. Helical transmembrane passes span 202 to 222 (TLLG…AVFL), 257 to 277 (LRLL…LSGD), 291 to 311 (FVGY…VLFG), 320 to 340 (TVLF…LLLW), 344 to 364 (PSQL…DAVW), and 395 to 415 (FVIA…YVLL). Residues 438 to 457 (GPLAAGRTKPAEDGATQTKL) form a disordered region.

The protein belongs to the unc-93 family.

It localises to the cell membrane. The polypeptide is Protein unc-93 homolog A (UNC93A) (Bos taurus (Bovine)).